The following is a 205-amino-acid chain: Endoplasmic reticulum membrane protein complex subunit 10 (205 aa).

An N-terminal signal peptide occupies residues 1 to 17 (MLVRLLRVILLASMVFC). Residues 18-172 (ADILQLSYSD…VKEVSWFQKN (155 aa)) lie on the Lumenal side of the membrane. Asn-47 is a glycosylation site (N-linked (GlcNAc...) asparagine). Residues 173-190 (WKMLLLGLLIYNFVAGSA) form a helical membrane-spanning segment. Residues 191 to 205 (KKQQQGGAGADQKTE) are Cytoplasmic-facing.

Component of the ER membrane protein complex (EMC).

Its subcellular location is the endoplasmic reticulum membrane. Part of the endoplasmic reticulum membrane protein complex (EMC) that enables the energy-independent insertion into endoplasmic reticulum membranes of newly synthesized membrane proteins. Preferentially accommodates proteins with transmembrane domains that are weakly hydrophobic or contain destabilizing features such as charged and aromatic residues. Involved in the cotranslational insertion of multi-pass membrane proteins in which stop-transfer membrane-anchor sequences become ER membrane spanning helices. It is also required for the post-translational insertion of tail-anchored/TA proteins in endoplasmic reticulum membranes. By mediating the proper cotranslational insertion of N-terminal transmembrane domains in an N-exo topology, with translocated N-terminus in the lumen of the ER, controls the topology of multi-pass membrane proteins. The chain is Endoplasmic reticulum membrane protein complex subunit 10 from Saccharomyces cerevisiae (strain ATCC 204508 / S288c) (Baker's yeast).